A 256-amino-acid polypeptide reads, in one-letter code: GTP cyclohydrolase FolE2 (256 aa).

The protein belongs to the GTP cyclohydrolase IV family.

The enzyme catalyses GTP + H2O = 7,8-dihydroneopterin 3'-triphosphate + formate + H(+). It functions in the pathway cofactor biosynthesis; 7,8-dihydroneopterin triphosphate biosynthesis; 7,8-dihydroneopterin triphosphate from GTP: step 1/1. Functionally, converts GTP to 7,8-dihydroneopterin triphosphate. The protein is GTP cyclohydrolase FolE2 of Caldicellulosiruptor bescii (strain ATCC BAA-1888 / DSM 6725 / KCTC 15123 / Z-1320) (Anaerocellum thermophilum).